Consider the following 782-residue polypeptide: Homeotic protein proboscipedia (782 aa).

6 disordered regions span residues 1–23 (MQEV…ESPL), 153–195 (PQTP…VPEN), 251–336 (MKHK…GISS), 358–380 (SSVS…KDDG), 439–493 (IATP…QQQP), and 547–586 (YYNY…ADFE). The short motif at 164-169 (EYPWMK) is the Antp-type hexapeptide element. A DNA-binding region (homeobox) is located at residues 198–257 (PRRLRTAYTNTQLLELEKEFHFNKYLCRPRRIEIAASLDLTERQVKVWFQNRRMKHKRQT). The span at 308–321 (NNNTPSATNNNPSA) shows a compositional bias: low complexity. A compositionally biased stretch (polar residues) spans 322 to 336 (GNLTPNSSLETGISS). The segment covering 452–463 (NGSGGGPAGGYF) has biased composition (gly residues). The segment covering 464–493 (PGYYPSPKQQQQVQQQQLHPQQQQLPQQQP) has biased composition (low complexity). Over residues 563–580 (QQHHHHAQHHQQQQHHQN) the composition is skewed to basic residues.

It belongs to the Antp homeobox family. Proboscipedia subfamily.

It localises to the nucleus. Functionally, sequence-specific transcription factor which is part of a developmental regulatory system that provides cells with specific positional identities on the anterior-posterior axis. Controls development of mouthparts, and labial and maxillary palps. The protein is Homeotic protein proboscipedia (pb) of Drosophila melanogaster (Fruit fly).